The chain runs to 60 residues: Small ribosomal subunit protein eS17 (60 aa).

It belongs to the eukaryotic ribosomal protein eS17 family.

In Methanosphaera stadtmanae (strain ATCC 43021 / DSM 3091 / JCM 11832 / MCB-3), this protein is Small ribosomal subunit protein eS17.